Here is a 168-residue protein sequence, read N- to C-terminus: ATP synthase subunit b (168 aa).

Residues 9–29 traverse the membrane as a helical segment; sequence AIPFGTIAYTLVVFLILLVML.

Belongs to the ATPase B chain family. In terms of assembly, F-type ATPases have 2 components, F(1) - the catalytic core - and F(0) - the membrane proton channel. F(1) has five subunits: alpha(3), beta(3), gamma(1), delta(1), epsilon(1). F(0) has three main subunits: a(1), b(2) and c(10-14). The alpha and beta chains form an alternating ring which encloses part of the gamma chain. F(1) is attached to F(0) by a central stalk formed by the gamma and epsilon chains, while a peripheral stalk is formed by the delta and b chains.

The protein resides in the cell membrane. Its function is as follows. F(1)F(0) ATP synthase produces ATP from ADP in the presence of a proton or sodium gradient. F-type ATPases consist of two structural domains, F(1) containing the extramembraneous catalytic core and F(0) containing the membrane proton channel, linked together by a central stalk and a peripheral stalk. During catalysis, ATP synthesis in the catalytic domain of F(1) is coupled via a rotary mechanism of the central stalk subunits to proton translocation. Component of the F(0) channel, it forms part of the peripheral stalk, linking F(1) to F(0). The sequence is that of ATP synthase subunit b from Bacillus cytotoxicus (strain DSM 22905 / CIP 110041 / 391-98 / NVH 391-98).